We begin with the raw amino-acid sequence, 129 residues long: Small ribosomal subunit protein uS11 (129 aa).

This sequence belongs to the universal ribosomal protein uS11 family. Part of the 30S ribosomal subunit. Interacts with proteins S7 and S18. Binds to IF-3.

Located on the platform of the 30S subunit, it bridges several disparate RNA helices of the 16S rRNA. Forms part of the Shine-Dalgarno cleft in the 70S ribosome. This Sinorhizobium medicae (strain WSM419) (Ensifer medicae) protein is Small ribosomal subunit protein uS11.